Consider the following 1452-residue polypeptide: Receptor-type tyrosine-protein phosphatase mu (1452 aa).

Positions 1-20 (MRTLGTCLVTLAGLLLTAAG) are cleaved as a signal peptide. Residues 21–742 (ETFSGGCLFD…PEKQTDHTVK (722 aa)) are Extracellular-facing. Residues 22–184 (TFSGGCLFDE…VKVLGHPCTR (163 aa)) form the MAM domain. Cys-27 and Cys-36 are joined by a disulfide. N-linked (GlcNAc...) asparagine glycans are attached at residues Asn-72, Asn-92, Asn-131, and Asn-249. Cystine bridges form between Cys-96-Cys-182 and Cys-206-Cys-260. In terms of domain architecture, Ig-like C2-type spans 186–277 (PHFLRIQNVE…VGISNYAELV (92 aa)). Fibronectin type-III domains lie at 284–379 (PIAP…CADP), 382–480 (GPRK…TDED), 481–587 (LPGA…SAPS), and 589–671 (PAYE…DSLQ). Asn-406, Asn-414, Asn-454, Asn-534, Asn-544, Asn-598, Asn-651, and Asn-681 each carry an N-linked (GlcNAc...) asparagine glycan. A helical transmembrane segment spans residues 743–764 (IAGVIAGILLFVIIFLGVVLVM). The Cytoplasmic portion of the chain corresponds to 765-1452 (KKRKLAKKRK…EVALEYLNSG (688 aa)). Ser-821 carries the post-translational modification Phosphoserine. Tyrosine-protein phosphatase domains lie at 900 to 1154 (FKEE…ILEA) and 1186 to 1448 (IKEE…ALEY). Substrate contacts are provided by residues Asp-1063, 1095–1101 (CSAGAGR), and Gln-1139. Cys-1095 (phosphocysteine intermediate) is an active-site residue. The active-site Phosphocysteine intermediate is the Cys-1389.

The protein belongs to the protein-tyrosine phosphatase family. Receptor class 2B subfamily. Homodimer. Most abundant in lung, less in brain and heart.

The protein resides in the cell membrane. The catalysed reaction is O-phospho-L-tyrosyl-[protein] + H2O = L-tyrosyl-[protein] + phosphate. Receptor protein-tyrosine phosphatase that mediates homotypic cell-cell interactions and plays a role in adipogenic differentiation via modulation of p120 catenin/CTNND1 phosphorylation. Promotes CTNND1 dephosphorylation and prevents its cytoplasmic localization where it inhibits SLC2A4 membrane trafficking. In turn, SLC2A4 is directed to the plasma membrane and performs its glucose transporter function. This chain is Receptor-type tyrosine-protein phosphatase mu (Ptprm), found in Mus musculus (Mouse).